The chain runs to 881 residues: Mechanosensitive ion channel protein 4 (881 aa).

The tract at residues 35 to 245 (FWHNDKSSKP…EEEDPFSEED (211 aa)) is disordered. The segment covering 56–66 (FMRRSSEKSEE) has biased composition (basic and acidic residues). Composition is skewed to polar residues over residues 73-82 (LINQFLNKQK), 100-118 (QKNT…SASP), and 206-230 (TPRS…NQGG). Residues 234–245 (LEEEEDPFSEED) are compositionally biased toward acidic residues. 4 consecutive transmembrane segments (helical) span residues 255-275 (ICVW…SLIC), 297-317 (VMVL…KLFV), 339-359 (KPVQ…FLFD), and 377-397 (VLIC…LVKV). Residues 457 to 501 (GPKAVSSPPQVTVGSGRLQKSPSRVGKSPVLSRSGSKKEGGEEGI) are disordered. Residues 463 to 478 (SPPQVTVGSGRLQKSP) are compositionally biased toward polar residues. Residues 492–501 (SKKEGGEEGI) are compositionally biased toward basic and acidic residues. The next 2 helical transmembrane spans lie at 643-663 (IVDV…LGIA) and 678-698 (VVFV…FVFV).

The protein belongs to the MscS (TC 1.A.23) family.

The protein resides in the membrane. Mechanosensitive channel that opens in response to stretch forces in the membrane lipid bilayer. The protein is Mechanosensitive ion channel protein 4 (MSL4) of Arabidopsis thaliana (Mouse-ear cress).